The primary structure comprises 837 residues: Striatin-interacting protein 1 (837 aa).

Position 1 is an N-acetylmethionine (methionine 1). Positions 1-67 (MEPAAGTPGP…DSEGYSESPD (67 aa)) are disordered. The span at 18–35 (PQPPPPPPPATAQPPPGA) shows a compositional bias: pro residues. Over residues 47-60 (KAREFNRNQRKDSE) the composition is skewed to basic and acidic residues. Residues serine 59, serine 335, and serine 339 each carry the phosphoserine modification. The tract at residues 336–423 (PPASASDLIE…DRLTCPKGLP (88 aa)) is disordered. The span at 356–377 (KALIKQDNLDAFNERDPYKADD) shows a compositional bias: basic and acidic residues. The span at 378 to 391 (SREEEEENDDDNSL) shows a compositional bias: acidic residues. Position 788 is a phosphoserine (serine 788). The segment at 796 to 837 (DNCLQSVLGQRVDLPEDFQMNYDLWLEREVFSKPISWEELLQ) is required for STRIPAK core complex formation.

It belongs to the STRIP family. As to quaternary structure, part of the core of STRIPAK complexes composed of PP2A catalytic and scaffolding subunits, the striatins (PP2A regulatory subunits), the striatin-associated proteins MOB4, STRIP1 and STRIP2, PDCD10 and members of the STE20 kinases, such as STK24 and STK26. The STRIPAK complex can be extended by adapter proteins such as SLMAP:SIKE1, CTTNBP2 or CTTNBP2NL. Interacts with CDC42BPB. Interacts with CTTNBP2NL.

It is found in the cytoplasm. Plays a role in the regulation of cell morphology and cytoskeletal organization. Required in the cortical actin filament dynamics and cell shape. Part of the striatin-interacting phosphatase and kinase (STRIPAK) complexes. STRIPAK complexes have critical roles in protein (de)phosphorylation and are regulators of multiple signaling pathways including Hippo, MAPK, nuclear receptor and cytoskeleton remodeling. Different types of STRIPAK complexes are involved in a variety of biological processes such as cell growth, differentiation, apoptosis, metabolism and immune regulation. The polypeptide is Striatin-interacting protein 1 (STRIP1) (Bos taurus (Bovine)).